Reading from the N-terminus, the 248-residue chain is ATP synthase subunit a, chloroplastic (248 aa).

5 helical membrane-spanning segments follow: residues 38 to 58 (QVLI…TIAV), 96 to 116 (VPFI…GALL), 135 to 155 (INTT…AGLA), 200 to 220 (LVVA…VMFL), and 221 to 241 (GLFT…AYIG).

Belongs to the ATPase A chain family. As to quaternary structure, F-type ATPases have 2 components, CF(1) - the catalytic core - and CF(0) - the membrane proton channel. CF(1) has five subunits: alpha(3), beta(3), gamma(1), delta(1), epsilon(1). CF(0) has four main subunits: a, b, b' and c.

The protein resides in the plastid. Its subcellular location is the chloroplast thylakoid membrane. Key component of the proton channel; it plays a direct role in the translocation of protons across the membrane. This is ATP synthase subunit a, chloroplastic from Cycas taitungensis (Prince sago).